A 132-amino-acid chain; its full sequence is Small ribosomal subunit protein uS8 (132 aa).

Belongs to the universal ribosomal protein uS8 family. In terms of assembly, part of the 30S ribosomal subunit. Contacts proteins S5 and S12.

Functionally, one of the primary rRNA binding proteins, it binds directly to 16S rRNA central domain where it helps coordinate assembly of the platform of the 30S subunit. This is Small ribosomal subunit protein uS8 from Geobacter sp. (strain M21).